We begin with the raw amino-acid sequence, 452 residues long: MAENQDYASGNGGIKALLLNFIHSQSFSGIFLFFCAVVAMISANSALSESYFHLWHTEIGFFIGETFIGMSLHHWINDVLMSFFFLMVGLEIKRELLFGELAGIKRAAFPAIAALGGMIVPAIVYTLFNFGTDSAHGFGIPMATDIAFALGVLLLLGDKVSLALKVFLVSLAVVDDLGAVVVIAIFYTEDLQTLWLLYSVVILGLLIGLNKMGVRSLFPYAILGVLLWITVHNCGIHATIAAVALAFTIPVKPKIESENFAQEAKELLERFLSHDKERANLLLASEQVHSVELLSKHSKSVQSPLVRLEHALHPWSAYFIMPVFAFANAGVAISSNIHFDIDGVLPGIMLGLIVGKPVGILGLTYLAEKMGIATRPEGVMWIDILGAGMLAGIGFTMSIFITNLAFTNPEATDVAKIAILSASLFAGALGYFFISIRCRFKKKKEACCTIKS.

11 consecutive transmembrane segments (helical) span residues Phe27–Leu47, Phe67–Met87, Ala108–Phe128, Gly137–Gly157, Val166–Phe186, Leu194–Val214, Ser216–Ile236, Pro314–Ser334, Gly343–Leu363, Trp381–Ile401, and Val414–Ile434.

The protein belongs to the NhaA Na(+)/H(+) (TC 2.A.33) antiporter family.

The protein localises to the cell inner membrane. The enzyme catalyses Na(+)(in) + 2 H(+)(out) = Na(+)(out) + 2 H(+)(in). In terms of biological role, na(+)/H(+) antiporter that extrudes sodium in exchange for external protons. This is Na(+)/H(+) antiporter NhaA from Wolinella succinogenes (strain ATCC 29543 / DSM 1740 / CCUG 13145 / JCM 31913 / LMG 7466 / NCTC 11488 / FDC 602W) (Vibrio succinogenes).